We begin with the raw amino-acid sequence, 151 residues long: Dehydrin Rab16D (151 aa).

The segment at 1-138 is disordered; that stretch reads MEYQGQHGGH…TADAGGEKKG (138 aa). The span at 39–51 shows a compositional bias: basic and acidic residues; the sequence is EPAREDKKTDGVL. Low complexity-rich tracts occupy residues 90-105 and 117-132; these read GNNQQQQQEHTTTTTG and IATGAHGGTAATTADA.

It belongs to the plant dehydrin family.

The chain is Dehydrin Rab16D (RAB16D) from Oryza sativa subsp. indica (Rice).